The sequence spans 491 residues: UDP-N-acetylmuramate--L-alanine ligase (491 aa).

An ATP-binding site is contributed by G126–T132.

It belongs to the MurCDEF family.

It is found in the cytoplasm. The enzyme catalyses UDP-N-acetyl-alpha-D-muramate + L-alanine + ATP = UDP-N-acetyl-alpha-D-muramoyl-L-alanine + ADP + phosphate + H(+). It participates in cell wall biogenesis; peptidoglycan biosynthesis. Functionally, cell wall formation. The chain is UDP-N-acetylmuramate--L-alanine ligase from Shigella flexneri serotype 5b (strain 8401).